Here is a 388-residue protein sequence, read N- to C-terminus: Lipid-A-disaccharide synthase (388 aa).

Belongs to the LpxB family.

It carries out the reaction a lipid X + a UDP-2-N,3-O-bis[(3R)-3-hydroxyacyl]-alpha-D-glucosamine = a lipid A disaccharide + UDP + H(+). It participates in bacterial outer membrane biogenesis; LPS lipid A biosynthesis. Condensation of UDP-2,3-diacylglucosamine and 2,3-diacylglucosamine-1-phosphate to form lipid A disaccharide, a precursor of lipid A, a phosphorylated glycolipid that anchors the lipopolysaccharide to the outer membrane of the cell. The polypeptide is Lipid-A-disaccharide synthase (Sulfurihydrogenibium sp. (strain YO3AOP1)).